Here is a 358-residue protein sequence, read N- to C-terminus: Heat-inducible transcription repressor HrcA (358 aa).

The protein belongs to the HrcA family.

In terms of biological role, negative regulator of class I heat shock genes (grpE-dnaK-dnaJ and groELS operons). Prevents heat-shock induction of these operons. The polypeptide is Heat-inducible transcription repressor HrcA (Caulobacter vibrioides (strain ATCC 19089 / CIP 103742 / CB 15) (Caulobacter crescentus)).